The sequence spans 192 residues: Xanthine phosphoribosyltransferase (192 aa).

L20 and N27 together coordinate xanthine. A128–A132 contacts 5-phospho-alpha-D-ribose 1-diphosphate. K156 is a xanthine binding site.

This sequence belongs to the purine/pyrimidine phosphoribosyltransferase family. Xpt subfamily. As to quaternary structure, homodimer.

Its subcellular location is the cytoplasm. It catalyses the reaction XMP + diphosphate = xanthine + 5-phospho-alpha-D-ribose 1-diphosphate. It participates in purine metabolism; XMP biosynthesis via salvage pathway; XMP from xanthine: step 1/1. In terms of biological role, converts the preformed base xanthine, a product of nucleic acid breakdown, to xanthosine 5'-monophosphate (XMP), so it can be reused for RNA or DNA synthesis. This chain is Xanthine phosphoribosyltransferase, found in Staphylococcus epidermidis (strain ATCC 35984 / DSM 28319 / BCRC 17069 / CCUG 31568 / BM 3577 / RP62A).